Reading from the N-terminus, the 180-residue chain is Tubulin polymerization-promoting protein homolog (180 aa).

2 stretches are compositionally biased toward basic and acidic residues: residues 136 to 158 (TGAHKERFDAEGKGKGKSGRADT) and 169 to 180 (KNKDSYDKTHGK). A disordered region spans residues 136-180 (TGAHKERFDAEGKGKGKSGRADTTENTGYVGAYKNKDSYDKTHGK).

The protein belongs to the TPPP family.

Its function is as follows. Regulator of microtubule dynamics. The sequence is that of Tubulin polymerization-promoting protein homolog from Caenorhabditis elegans.